Here is a 326-residue protein sequence, read N- to C-terminus: NADH-ubiquinone oxidoreductase chain 1 (326 aa).

9 helical membrane passes run 1–21 (MFLLSLLIKIITIILPLLVAV), 41–61 (PNIVGVFGLLQPLADGLKLFV), 72–92 (IIIFILAPILTFLLALVSWCV), 104–124 (INIGVLYILAISSLGVYGIIT), 152–172 (IGLILINVLLCSGSLNFTEIV), 177–197 (SIWFVIPLFPIFIMFYISILA), 234–256 (YANMILMCSLTTILFFGGWLPPF), 268–288 (VWFGLKTTFLLFGFIWIRSSF), and 303–323 (ILLPLSLAWVFLISGILLSFN).

It belongs to the complex I subunit 1 family.

It is found in the mitochondrion inner membrane. It catalyses the reaction a ubiquinone + NADH + 5 H(+)(in) = a ubiquinol + NAD(+) + 4 H(+)(out). Functionally, core subunit of the mitochondrial membrane respiratory chain NADH dehydrogenase (Complex I) that is believed to belong to the minimal assembly required for catalysis. Complex I functions in the transfer of electrons from NADH to the respiratory chain. The immediate electron acceptor for the enzyme is believed to be ubiquinone. This chain is NADH-ubiquinone oxidoreductase chain 1 (ND1), found in Chondrus crispus (Carrageen Irish moss).